We begin with the raw amino-acid sequence, 517 residues long: Crotonobetaine/carnitine--CoA ligase (517 aa).

This sequence belongs to the ATP-dependent AMP-binding enzyme family.

It carries out the reaction 4-(trimethylamino)butanoate + ATP + CoA = 4-(trimethylamino)butanoyl-CoA + AMP + diphosphate. The enzyme catalyses crotonobetaine + ATP + CoA = crotonobetainyl-CoA + AMP + diphosphate. It catalyses the reaction (R)-carnitine + ATP + CoA = (R)-carnitinyl-CoA + AMP + diphosphate. It functions in the pathway amine and polyamine metabolism; carnitine metabolism. Its function is as follows. Catalyzes the transfer of CoA to carnitine, generating the initial carnitinyl-CoA needed for the CaiB reaction cycle. Also has activity toward crotonobetaine and gamma-butyrobetaine. The chain is Crotonobetaine/carnitine--CoA ligase from Escherichia fergusonii (strain ATCC 35469 / DSM 13698 / CCUG 18766 / IAM 14443 / JCM 21226 / LMG 7866 / NBRC 102419 / NCTC 12128 / CDC 0568-73).